The chain runs to 164 residues: Cytochrome c-type biogenesis protein CcmE (164 aa).

Topologically, residues 1 to 8 (MNPRRQKR) are cytoplasmic. The chain crosses the membrane as a helical; Signal-anchor for type II membrane protein span at residues 9-29 (LIVISAIVLVIGAAIGLMLYA). The Periplasmic portion of the chain corresponds to 30-164 (LSQNIDLFYT…QAYSTPKVSG (135 aa)). Residues His-132 and Tyr-136 each contribute to the heme site.

The protein belongs to the CcmE/CycJ family.

Its subcellular location is the cell inner membrane. Its function is as follows. Heme chaperone required for the biogenesis of c-type cytochromes. Transiently binds heme delivered by CcmC and transfers the heme to apo-cytochromes in a process facilitated by CcmF and CcmH. This chain is Cytochrome c-type biogenesis protein CcmE, found in Pseudoalteromonas atlantica (strain T6c / ATCC BAA-1087).